We begin with the raw amino-acid sequence, 446 residues long: Adenylosuccinate synthetase (446 aa).

GTP is bound by residues 12–18 (GDEGKGK) and 40–42 (GHT). The active-site Proton acceptor is the Asp13. Mg(2+) is bound by residues Asp13 and Gly40. Residues 13–16 (DEGK), 38–41 (NAGH), Thr128, Arg142, Gln223, Thr238, and Arg302 contribute to the IMP site. The Proton donor role is filled by His41. Substrate is bound at residue 298–304 (TTTGRRR). GTP is bound by residues Arg304, 330–332 (KLD), and 412–414 (SLG).

The protein belongs to the adenylosuccinate synthetase family. Homodimer. The cofactor is Mg(2+).

Its subcellular location is the cytoplasm. The catalysed reaction is IMP + L-aspartate + GTP = N(6)-(1,2-dicarboxyethyl)-AMP + GDP + phosphate + 2 H(+). It functions in the pathway purine metabolism; AMP biosynthesis via de novo pathway; AMP from IMP: step 1/2. Functionally, plays an important role in the de novo pathway of purine nucleotide biosynthesis. Catalyzes the first committed step in the biosynthesis of AMP from IMP. This chain is Adenylosuccinate synthetase, found in Acaryochloris marina (strain MBIC 11017).